Here is a 219-residue protein sequence, read N- to C-terminus: MNQLEMKKLAAQAALQYVKADTIVGVGSGSTVNCFIEALGTIKDKIQGAVAASKESEELLRKQGIEVFNANDVSSLDIYVDGADEINPQKMMIKGGGAALTREKIVAALAKKFICIVDSSKQVDVLGSTFPLPVEVIPMARSQVGRKLAALGGSPEYREGVVTDNGNVILDVHNFSILNPVEIEKELNNVAGVVTNGIFALRGADVVIVGTPEGAKVID.

Substrate contacts are provided by residues 28–31 (SGST), 81–84 (DGAD), and 94–97 (KGGG). Catalysis depends on E103, which acts as the Proton acceptor. K121 provides a ligand contact to substrate.

The protein belongs to the ribose 5-phosphate isomerase family. Homodimer.

It catalyses the reaction aldehydo-D-ribose 5-phosphate = D-ribulose 5-phosphate. It participates in carbohydrate degradation; pentose phosphate pathway; D-ribose 5-phosphate from D-ribulose 5-phosphate (non-oxidative stage): step 1/1. Its function is as follows. Catalyzes the reversible conversion of ribose-5-phosphate to ribulose 5-phosphate. In Haemophilus influenzae (strain ATCC 51907 / DSM 11121 / KW20 / Rd), this protein is Ribose-5-phosphate isomerase A.